Consider the following 95-residue polypeptide: Antitoxin VapB (95 aa).

Its function is as follows. Antitoxin component of a type II toxin-antitoxin (TA) system. Partially neutralizes the RNase activity of cognate toxin VapC. This Rickettsia bellii (strain RML369-C) protein is Antitoxin VapB.